The following is a 264-amino-acid chain: Thymidylate synthase (264 aa).

Arg21 provides a ligand contact to dUMP. Residue His51 coordinates (6R)-5,10-methylene-5,6,7,8-tetrahydrofolate. 126–127 is a dUMP binding site; it reads RR. Cys146 (nucleophile) is an active-site residue. Residues 166-169, Asn177, and 207-209 contribute to the dUMP site; these read RSAD and HLY. Asp169 serves as a coordination point for (6R)-5,10-methylene-5,6,7,8-tetrahydrofolate. Ala263 is a binding site for (6R)-5,10-methylene-5,6,7,8-tetrahydrofolate.

This sequence belongs to the thymidylate synthase family. Bacterial-type ThyA subfamily. Homodimer.

It localises to the cytoplasm. It carries out the reaction dUMP + (6R)-5,10-methylene-5,6,7,8-tetrahydrofolate = 7,8-dihydrofolate + dTMP. The protein operates within pyrimidine metabolism; dTTP biosynthesis. Functionally, catalyzes the reductive methylation of 2'-deoxyuridine-5'-monophosphate (dUMP) to 2'-deoxythymidine-5'-monophosphate (dTMP) while utilizing 5,10-methylenetetrahydrofolate (mTHF) as the methyl donor and reductant in the reaction, yielding dihydrofolate (DHF) as a by-product. This enzymatic reaction provides an intracellular de novo source of dTMP, an essential precursor for DNA biosynthesis. The chain is Thymidylate synthase from Rhodopirellula baltica (strain DSM 10527 / NCIMB 13988 / SH1).